Here is a 189-residue protein sequence, read N- to C-terminus: Calcium and integrin-binding family member 2 (189 aa).

3 EF-hand domains span residues 68–103, 105–140, and 146–181; these read RENP…FSEQ, PRDI…MTKN, and EHQQ…APDF. Ca(2+) is bound by residues D118, D120, D122, D129, D159, D161, D163, K165, and E170.

As to quaternary structure, monomer. Homodimer.

The protein localises to the cytoplasm. Calcium- and integrin-binding protein. Plays a role in intracellular calcium homeostasis. Critical for proper photoreceptor cell maintenance and function. Required for prevention of light-dependent retinal degeneration. This Drosophila melanogaster (Fruit fly) protein is Calcium and integrin-binding family member 2.